The sequence spans 164 residues: FMN reductase (NADH) RutF (164 aa).

This sequence belongs to the non-flavoprotein flavin reductase family. RutF subfamily.

It catalyses the reaction FMNH2 + NAD(+) = FMN + NADH + 2 H(+). In terms of biological role, catalyzes the reduction of FMN to FMNH2 which is used to reduce pyrimidine by RutA via the Rut pathway. This Klebsiella pneumoniae (strain 342) protein is FMN reductase (NADH) RutF.